The following is a 210-amino-acid chain: 7-carboxy-7-deazaguanine synthase (210 aa).

Substrate is bound by residues 12–14 (LQG) and R27. Positions 18 to 210 (QAGKAAVFCR…VQTHKYLGLP (193 aa)) constitute a Radical SAM core domain. Residues C31, C46, and C49 each contribute to the [4Fe-4S] cluster site. T51 contributes to the Mg(2+) binding site. Substrate is bound at residue T90. S-adenosyl-L-methionine-binding positions include G92, 133 to 135 (SPK), and 173 to 176 (QPMD). Residue P210 participates in substrate binding.

Belongs to the radical SAM superfamily. 7-carboxy-7-deazaguanine synthase family. In terms of assembly, homodimer. [4Fe-4S] cluster serves as cofactor. Requires S-adenosyl-L-methionine as cofactor. The cofactor is Mg(2+).

It carries out the reaction 6-carboxy-5,6,7,8-tetrahydropterin + H(+) = 7-carboxy-7-deazaguanine + NH4(+). It functions in the pathway purine metabolism; 7-cyano-7-deazaguanine biosynthesis. Its function is as follows. Catalyzes the complex heterocyclic radical-mediated conversion of 6-carboxy-5,6,7,8-tetrahydropterin (CPH4) to 7-carboxy-7-deazaguanine (CDG), a step common to the biosynthetic pathways of all 7-deazapurine-containing compounds. This Caulobacter vibrioides (strain ATCC 19089 / CIP 103742 / CB 15) (Caulobacter crescentus) protein is 7-carboxy-7-deazaguanine synthase.